The following is a 259-amino-acid chain: Thiazole synthase (259 aa).

Lys100 functions as the Schiff-base intermediate with DXP in the catalytic mechanism. Residues Gly161, 187–188 (AG), and 209–210 (NT) contribute to the 1-deoxy-D-xylulose 5-phosphate site.

This sequence belongs to the ThiG family. In terms of assembly, homotetramer. Forms heterodimers with either ThiH or ThiS.

It is found in the cytoplasm. The enzyme catalyses [ThiS sulfur-carrier protein]-C-terminal-Gly-aminoethanethioate + 2-iminoacetate + 1-deoxy-D-xylulose 5-phosphate = [ThiS sulfur-carrier protein]-C-terminal Gly-Gly + 2-[(2R,5Z)-2-carboxy-4-methylthiazol-5(2H)-ylidene]ethyl phosphate + 2 H2O + H(+). It participates in cofactor biosynthesis; thiamine diphosphate biosynthesis. In terms of biological role, catalyzes the rearrangement of 1-deoxy-D-xylulose 5-phosphate (DXP) to produce the thiazole phosphate moiety of thiamine. Sulfur is provided by the thiocarboxylate moiety of the carrier protein ThiS. In vitro, sulfur can be provided by H(2)S. This is Thiazole synthase from Halalkalibacterium halodurans (strain ATCC BAA-125 / DSM 18197 / FERM 7344 / JCM 9153 / C-125) (Bacillus halodurans).